A 647-amino-acid polypeptide reads, in one-letter code: UvrABC system protein C (647 aa).

One can recognise a GIY-YIG domain in the interval valine 16 to isoleucine 95. One can recognise a UVR domain in the interval aspartate 208 to alanine 243.

It belongs to the UvrC family. As to quaternary structure, interacts with UvrB in an incision complex.

It is found in the cytoplasm. In terms of biological role, the UvrABC repair system catalyzes the recognition and processing of DNA lesions. UvrC both incises the 5' and 3' sides of the lesion. The N-terminal half is responsible for the 3' incision and the C-terminal half is responsible for the 5' incision. The sequence is that of UvrABC system protein C from Mycobacterium leprae (strain Br4923).